The sequence spans 235 residues: MGNGMTKVLPGLYLGNFIDAKDPDQLGRNKITHIISIHESPQPLLQDITYLRISVSDTPEVPIKKHFKECVHFIHSCRLNGGNCLVHCFAGISRSTTIVIAYVMTVTGLGWQEVLEAIKASRPIANPNPGFRQQLEEFGWANSQKLRRQLEERFGEIPFRDEEDLRALLPLCRRCRQGSATSAASATTASSAAEGTLQRLVPRSPRDSHQPLPLLARVKQTFFCLPRCLSRKGGK.

G2 carries the N-myristoyl glycine lipid modification. The 141-residue stretch at 4-144 (GMTKVLPGLY…LEEFGWANSQ (141 aa)) folds into the Tyrosine-protein phosphatase domain. C88 functions as the Phosphocysteine intermediate in the catalytic mechanism. Positions 183–193 (AASATTASSAA) are enriched in low complexity. Residues 183–212 (AASATTASSAAEGTLQRLVPRSPRDSHQPL) form a disordered region.

Belongs to the protein-tyrosine phosphatase family. Non-receptor class dual specificity subfamily. Isoform 1 is expressed in testis; predominantly in developing spermatocytes (at protein level). Isoform 2 is highly expressed in testis. Expressed in spinal cord and specifically in oligodendroglial cells. Expressed in embryonic brain cortex; down-regulated in mice with experimental autoimmune encephalomyelitis (EAE).

The protein resides in the cell membrane. It carries out the reaction O-phospho-L-tyrosyl-[protein] + H2O = L-tyrosyl-[protein] + phosphate. The catalysed reaction is O-phospho-L-seryl-[protein] + H2O = L-seryl-[protein] + phosphate. It catalyses the reaction O-phospho-L-threonyl-[protein] + H2O = L-threonyl-[protein] + phosphate. In terms of biological role, may dephosphorylate MAPK13, ATF2, ERBB3, PDGFRB and SNX6. Functionally, may play a role in the regulation of oligodendrocyte differentiation. May play a role in the regulation of myelin formation. Involved in the regulation of Erk1/2 phosphorylation in Schwann cells; the signaling may be linked to the regulation of myelination. This is Dual specificity protein phosphatase 15 from Mus musculus (Mouse).